We begin with the raw amino-acid sequence, 69 residues long: uncharacterized protein (69 aa).

The segment at 21–42 is disordered; it reads MYAANKKSDARRRGKVGKEQWE. Residues 35-69 adopt a coiled-coil conformation; sequence KVGKEQWEKEMEQYNIQKAQFEKELKEKKEKELKK.

This is an uncharacterized protein from Acheta domesticus (House cricket).